The sequence spans 291 residues: Phosphatidylglycerol--prolipoprotein diacylglyceryl transferase (291 aa).

4 helical membrane-spanning segments follow: residues 24-44, 64-84, 99-119, and 125-145; these read WYAL…RALL, FILW…VLFY, IWKG…AVIL, and GLPI…GLFL. Position 147 (R147) interacts with a 1,2-diacyl-sn-glycero-3-phospho-(1'-sn-glycerol). 3 helical membrane passes run 187–207, 211–231, and 247–267; these read ATLE…AGAL, GLVL…GEFF, and MGML…CVAW.

It belongs to the Lgt family.

It localises to the cell inner membrane. The enzyme catalyses L-cysteinyl-[prolipoprotein] + a 1,2-diacyl-sn-glycero-3-phospho-(1'-sn-glycerol) = an S-1,2-diacyl-sn-glyceryl-L-cysteinyl-[prolipoprotein] + sn-glycerol 1-phosphate + H(+). It participates in protein modification; lipoprotein biosynthesis (diacylglyceryl transfer). In terms of biological role, catalyzes the transfer of the diacylglyceryl group from phosphatidylglycerol to the sulfhydryl group of the N-terminal cysteine of a prolipoprotein, the first step in the formation of mature lipoproteins. This is Phosphatidylglycerol--prolipoprotein diacylglyceryl transferase from Nitrobacter hamburgensis (strain DSM 10229 / NCIMB 13809 / X14).